The chain runs to 790 residues: Cadherin-18 (790 aa).

The signal sequence occupies residues 1 to 24; it reads MKITSTSCICPVLVCLCFVQRCYG. Positions 25 to 53 are excised as a propeptide; that stretch reads TAHHSSIKVMRNQTKHIEGETEVHHRPKR. Asn36 is a glycosylation site (N-linked (GlcNAc...) asparagine). Cadherin domains are found at residues 54-159, 160-268, 269-383, 384-486, and 487-608; these read GWVW…APKF, TDGP…PPRF, PQKH…PPLF, SMPS…DNPP, and ELAR…FLSS. At 54–608 the chain is on the extracellular side; the sequence is GWVWNQFFVL…TCHAEAFLSS (555 aa). N-linked (GlcNAc...) asparagine glycosylation is present at Asn255. Asn455 and Asn536 each carry an N-linked (GlcNAc...) asparagine glycan. The helical transmembrane segment at 609 to 636 threads the bilayer; that stretch reads AGLSTGALIAILLCVLILLAIVVLFITL. Topologically, residues 637–790 are cytoplasmic; the sequence is RRSKKEPLII…YGEIESERTT (154 aa). Residue Ser786 is modified to Phosphoserine.

It is found in the cell membrane. Cadherins are calcium-dependent cell adhesion proteins. They preferentially interact with themselves in a homophilic manner in connecting cells; cadherins may thus contribute to the sorting of heterogeneous cell types. The chain is Cadherin-18 (CDH18) from Homo sapiens (Human).